The following is a 495-amino-acid chain: Steroid 21-hydroxylase (495 aa).

Heme b-binding residues include Arg92 and Lys121. Arg234 serves as a coordination point for 17alpha-hydroxyprogesterone. Residue Arg234 coordinates progesterone. 3 residues coordinate heme b: His366, Arg427, and Cys429.

It belongs to the cytochrome P450 family. Requires heme b as cofactor.

The protein resides in the endoplasmic reticulum membrane. Its subcellular location is the microsome membrane. It catalyses the reaction progesterone + reduced [NADPH--hemoprotein reductase] + O2 = 21-hydroxyprogesterone + oxidized [NADPH--hemoprotein reductase] + H2O + H(+). The catalysed reaction is 17alpha-hydroxyprogesterone + reduced [NADPH--hemoprotein reductase] + O2 = 11-deoxycortisol + oxidized [NADPH--hemoprotein reductase] + H2O + H(+). In terms of biological role, a cytochrome P450 monooxygenase that plays a major role in adrenal steroidogenesis. Catalyzes the hydroxylation at C-21 of progesterone and 17alpha-hydroxyprogesterone to respectively form 11-deoxycorticosterone and 11-deoxycortisol, intermediate metabolites in the biosynthetic pathway of mineralocorticoids and glucocorticoids. Mechanistically, uses molecular oxygen inserting one oxygen atom into a substrate, and reducing the second into a water molecule, with two electrons provided by NADPH via cytochrome P450 reductase (CPR; NADPH-ferrihemoprotein reductase). The chain is Steroid 21-hydroxylase (CYP21A2) from Homo sapiens (Human).